The chain runs to 253 residues: MWARTAAWVFGLPETLREICYRRDNVKPVDELQKTIGHRFGDMELLLTAMTHSSWANEQAVPVEHNERLEFLGDAVLELCVSEELFRRFPSAREGDLTRMRSRLVSKPSLEGVARELRLDMSLRLGKGEESQGGRERGSLLSDALEAMLGAVFLDAGYIAAKGVVMRILGPHFPEALVPVRTKDYKSQLQELTQKLFRDRPVYTLLGSSGPEHDKQFDVRVVLPDGTVFEATGPSMKRAEQMAAARAVATLDK.

The 129-residue stretch at 29 to 157 (VDELQKTIGH…MLGAVFLDAG (129 aa)) folds into the RNase III domain. Position 70 (glutamate 70) interacts with Mg(2+). Residue aspartate 74 is part of the active site. Mg(2+) contacts are provided by aspartate 143 and glutamate 146. Glutamate 146 is a catalytic residue. A DRBM domain is found at 184–253 (DYKSQLQELT…AARAVATLDK (70 aa)).

It belongs to the ribonuclease III family. As to quaternary structure, homodimer. Requires Mg(2+) as cofactor.

The protein resides in the cytoplasm. The enzyme catalyses Endonucleolytic cleavage to 5'-phosphomonoester.. Digests double-stranded RNA. Involved in the processing of primary rRNA transcript to yield the immediate precursors to the large and small rRNAs (23S and 16S). Processes some mRNAs, and tRNAs when they are encoded in the rRNA operon. Processes pre-crRNA and tracrRNA of type II CRISPR loci if present in the organism. This Nitratidesulfovibrio vulgaris (strain ATCC 29579 / DSM 644 / CCUG 34227 / NCIMB 8303 / VKM B-1760 / Hildenborough) (Desulfovibrio vulgaris) protein is Ribonuclease 3.